We begin with the raw amino-acid sequence, 356 residues long: DNA polymerase IV (356 aa).

The region spanning 7 to 188 (IIHIDMDAFY…IPVTKFYGVG (182 aa)) is the UmuC domain. 2 residues coordinate Mg(2+): D11 and D106. The active site involves E107.

Belongs to the DNA polymerase type-Y family. As to quaternary structure, monomer. Requires Mg(2+) as cofactor.

It localises to the cytoplasm. The catalysed reaction is DNA(n) + a 2'-deoxyribonucleoside 5'-triphosphate = DNA(n+1) + diphosphate. Poorly processive, error-prone DNA polymerase involved in untargeted mutagenesis. Copies undamaged DNA at stalled replication forks, which arise in vivo from mismatched or misaligned primer ends. These misaligned primers can be extended by PolIV. Exhibits no 3'-5' exonuclease (proofreading) activity. May be involved in translesional synthesis, in conjunction with the beta clamp from PolIII. The sequence is that of DNA polymerase IV from Listeria welshimeri serovar 6b (strain ATCC 35897 / DSM 20650 / CCUG 15529 / CIP 8149 / NCTC 11857 / SLCC 5334 / V8).